Reading from the N-terminus, the 119-residue chain is ATP-dependent Clp protease adapter protein ClpS (119 aa).

Belongs to the ClpS family. As to quaternary structure, binds to the N-terminal domain of the chaperone ClpA.

Involved in the modulation of the specificity of the ClpAP-mediated ATP-dependent protein degradation. This is ATP-dependent Clp protease adapter protein ClpS from Marinobacter nauticus (strain ATCC 700491 / DSM 11845 / VT8) (Marinobacter aquaeolei).